The primary structure comprises 503 residues: Plant-specific TFIIB-related protein 1 (503 aa).

The segment at 1–33 adopts a TFIIB-type zinc-finger fold; sequence MKCPYCSSAQGRCTTTSSGRSITECSSCGRVME. 4 disordered regions span residues 328 to 366, 411 to 431, 436 to 455, and 468 to 503; these read PEKA…AKPI, NAMD…LGDK, IYLR…TGIS, and GSSS…HGDF. Over residues 333-346 the composition is skewed to low complexity; it reads PTTTISTTRSTTPR. Positions 355-366 are enriched in basic and acidic residues; it reads FVEKDKPSAKPI.

In terms of processing, ubiquinated. Subsequent degradation by the proteasome pathway. In terms of tissue distribution, widely expressed.

It localises to the plastid. It is found in the chloroplast outer membrane. The protein localises to the nucleus. Functionally, plant-specific TFIIB-related protein that may be involved in an intracellular signaling pathway between plastids and the nucleus. May act as general transcription factor (GTF) of RNA polymerase I-dependent transcription and rRNA synthesis. Forms a ternary complex with TBP2 and the rDNA promoter region. The sequence is that of Plant-specific TFIIB-related protein 1 from Arabidopsis thaliana (Mouse-ear cress).